The following is a 210-amino-acid chain: Chorismate pyruvate-lyase (210 aa).

Belongs to the chorismate pyruvate-lyase type 2 family.

It catalyses the reaction chorismate = 4-hydroxybenzoate + pyruvate. Removes the pyruvyl group from chorismate to provide 4-hydroxybenzoate (4HB). Involved in the synthesis of glycosylated p-hydroxybenzoic acid methyl esters (p-HBADs) and phenolic glycolipids (PGL) that play important roles in the pathogenesis of mycobacterial infections. This Mycobacterium leprae (strain TN) protein is Chorismate pyruvate-lyase.